Here is a 718-residue protein sequence, read N- to C-terminus: Probable trehalose-phosphatase (718 aa).

Residues 449–470 are disordered; the sequence is LSMDQTGHKKVDAKKKPGIRKK. Residues 459–470 are compositionally biased toward basic residues; it reads VDAKKKPGIRKK.

In the N-terminal section; belongs to the glycosyltransferase 20 family. The protein in the C-terminal section; belongs to the trehalose phosphatase family.

It carries out the reaction alpha,alpha-trehalose 6-phosphate + H2O = alpha,alpha-trehalose + phosphate. The chain is Probable trehalose-phosphatase from Encephalitozoon cuniculi (strain GB-M1) (Microsporidian parasite).